The chain runs to 245 residues: Biosynthetic peptidoglycan transglycosylase (245 aa).

A helical transmembrane segment spans residues 13–35 (VGLARWIVYAGSVFAGAWLATQL).

This sequence belongs to the glycosyltransferase 51 family.

Its subcellular location is the cell inner membrane. It carries out the reaction [GlcNAc-(1-&gt;4)-Mur2Ac(oyl-L-Ala-gamma-D-Glu-L-Lys-D-Ala-D-Ala)](n)-di-trans,octa-cis-undecaprenyl diphosphate + beta-D-GlcNAc-(1-&gt;4)-Mur2Ac(oyl-L-Ala-gamma-D-Glu-L-Lys-D-Ala-D-Ala)-di-trans,octa-cis-undecaprenyl diphosphate = [GlcNAc-(1-&gt;4)-Mur2Ac(oyl-L-Ala-gamma-D-Glu-L-Lys-D-Ala-D-Ala)](n+1)-di-trans,octa-cis-undecaprenyl diphosphate + di-trans,octa-cis-undecaprenyl diphosphate + H(+). It functions in the pathway cell wall biogenesis; peptidoglycan biosynthesis. Its function is as follows. Peptidoglycan polymerase that catalyzes glycan chain elongation from lipid-linked precursors. In Burkholderia vietnamiensis (strain G4 / LMG 22486) (Burkholderia cepacia (strain R1808)), this protein is Biosynthetic peptidoglycan transglycosylase.